Here is a 1190-residue protein sequence, read N- to C-terminus: Isoleucine--tRNA ligase, cytoplasmic (1190 aa).

The 'HIGH' region motif lies at 49–59 (PFATGLPHYGH). Residues 271–299 (DKPKAKLSNGPAGDTKKANPKAKGAKPES) form a disordered region. A 'KMSKS' region motif is present at residues 632 to 636 (KMAKK). Lysine 635 is a binding site for ATP.

Belongs to the class-I aminoacyl-tRNA synthetase family.

The protein localises to the cytoplasm. The protein resides in the cytosol. The enzyme catalyses tRNA(Ile) + L-isoleucine + ATP = L-isoleucyl-tRNA(Ile) + AMP + diphosphate. In Arabidopsis thaliana (Mouse-ear cress), this protein is Isoleucine--tRNA ligase, cytoplasmic.